A 272-amino-acid polypeptide reads, in one-letter code: Protein FAM210A (272 aa).

One can recognise a DUF1279 domain in the interval 117-229 (DKSISLYQRF…GYMSTPPPVK (113 aa)). Residues 136-156 (VLIPVHLITSGVWFGTFYYAA) traverse the membrane as a helical segment. The stretch at 229-271 (KEYLQDRMEETKELITEKMEETKDRLTEKLQETKEKVSFKKKV) forms a coiled coil. Positions 246-272 (KMEETKDRLTEKLQETKEKVSFKKKVE) are disordered.

This sequence belongs to the FAM210 family. As to quaternary structure, interacts with ATAD3A.

The protein localises to the membrane. It localises to the mitochondrion. The protein resides in the cytoplasm. Functionally, may play a role in the structure and strength of both muscle and bone. This is Protein FAM210A (FAM210A) from Pongo abelii (Sumatran orangutan).